The following is a 377-amino-acid chain: UPF0754 membrane protein RBAM_010020 (377 aa).

The next 2 helical transmembrane spans lie at 1–21 (MGIA…GAVT) and 357–377 (YLGG…VILF).

The protein belongs to the UPF0754 family.

It is found in the cell membrane. This Bacillus velezensis (strain DSM 23117 / BGSC 10A6 / LMG 26770 / FZB42) (Bacillus amyloliquefaciens subsp. plantarum) protein is UPF0754 membrane protein RBAM_010020.